Here is a 216-residue protein sequence, read N- to C-terminus: Adenylate kinase (216 aa).

10–15 (GAGKGT) provides a ligand contact to ATP. Positions 30–59 (STGDMLREAVKADTPLGIEAKKVMDVGGLI) are NMP. AMP is bound by residues Thr-31, Arg-36, 57-59 (GLI), 85-88 (GFPR), and Gln-92. The segment at 122-159 (GRRAHLTSGRTYHIVYNPPKVEGIDDITGEELIQRTDD) is LID. Residues Arg-123 and 132-133 (TY) each bind ATP. Arg-156 and Arg-167 together coordinate AMP. ATP is bound at residue Gly-202.

Belongs to the adenylate kinase family. Monomer.

It localises to the cytoplasm. The catalysed reaction is AMP + ATP = 2 ADP. The protein operates within purine metabolism; AMP biosynthesis via salvage pathway; AMP from ADP: step 1/1. Its function is as follows. Catalyzes the reversible transfer of the terminal phosphate group between ATP and AMP. Plays an important role in cellular energy homeostasis and in adenine nucleotide metabolism. The protein is Adenylate kinase of Ruthia magnifica subsp. Calyptogena magnifica.